The primary structure comprises 470 residues: Cell division protein FtsP (470 aa).

The tat-type signal signal peptide spans 1 to 29; it reads MKNCSRRQLLKTTLFSTALFSVPAPLLAA.

The protein belongs to the FtsP family. In terms of processing, predicted to be exported by the Tat system. The position of the signal peptide cleavage has not been experimentally proven.

It is found in the periplasm. Functionally, cell division protein that is required for growth during stress conditions. May be involved in protecting or stabilizing the divisomal assembly under conditions of stress. This is Cell division protein FtsP from Aggregatibacter aphrophilus (strain NJ8700) (Haemophilus aphrophilus).